The chain runs to 215 residues: Protein C' (215 aa).

The segment at 12 to 34 (MPSFLKKILKLRGRRQEDESRSR) is disordered. Residues 15–22 (FLKKILKL) form an involved in self-degradation and in host STAT1 degradation region.

The protein belongs to the respirovirus protein C family. The different isoforms interact (via C-terminus) with unphosphorylated and phosphorylated human STAT1 (via N-terminus), favoring the formation of parallel STAT1 homodimers. The different isoforms do not interact with host STAT2. C protein interacts with L protein; this interaction has an inhibitory effect on viral transcription and replication. Y1 and Y2 proteins are produced not only by alternative initiation, but also by proteolytic cleavage of C'. Only alternative initiation is detected in vitro, whereas in vivo cleavage seems to be predominant.

It localises to the host cytoplasm. The different products prevent the establishment of cellular antiviral state by blocking the interferon-alpha/beta (IFN-alpha/beta) and IFN-gamma signaling pathways. They inhibit IFN-alpha/beta induced tyrosine phosphorylation of STAT1 and STAT2. Blocking the IFN-alpha/beta pathway requires binding to STAT1 in the cytoplasm. They inhibit IFN-gamma induced serine phosphorylation of STAT1. Block the IFN-gamma pathway by binding to and stabilizing the parallel form of the STAT1 dimer, further inducing high-molecular-weight complex formation and inhibition of transcription by IFN-gamma. May also have a role in preventing the cell to enter apoptosis. Modulate regulation of viral transcription and replication. Overexpression inhibits the viral RNA polymerase. The absence of all C', C, Y1 and Y2 proteins leads to viral delayed growth. Plays an important role in virion particles release. Modulates virion shape. The chain is Protein C' (P/V/C) from Sendai virus (strain Nagoya) (SeV).